The sequence spans 60 residues: Sec-independent protein translocase protein TatA (60 aa).

A helical membrane pass occupies residues 1 to 21; it reads MTPAGPAQLLIVALVVIVLFG.

It belongs to the TatA/E family. In terms of assembly, the Tat system comprises two distinct complexes: a TatABC complex, containing multiple copies of TatA, TatB and TatC subunits, and a separate TatA complex, containing only TatA subunits. Substrates initially bind to the TatABC complex, which probably triggers association of the separate TatA complex to form the active translocon.

The protein localises to the cell membrane. Part of the twin-arginine translocation (Tat) system that transports large folded proteins containing a characteristic twin-arginine motif in their signal peptide across membranes. TatA could form the protein-conducting channel of the Tat system. The chain is Sec-independent protein translocase protein TatA from Corynebacterium glutamicum (strain R).